We begin with the raw amino-acid sequence, 157 residues long: Transcriptional repressor NrdR (157 aa).

A zinc finger spans residues 3–34 (CPFCRHPDSRVVDSRTSDDGLSIRRRRQCPEC). In terms of domain architecture, ATP-cone spans 46–136 (LSVIKRNGVV…VYQGFDSLDD (91 aa)).

It belongs to the NrdR family. The cofactor is Zn(2+).

Its function is as follows. Negatively regulates transcription of bacterial ribonucleotide reductase nrd genes and operons by binding to NrdR-boxes. The sequence is that of Transcriptional repressor NrdR from Clavibacter sepedonicus (Clavibacter michiganensis subsp. sepedonicus).